The primary structure comprises 125 residues: Small ribosomal subunit protein uS12 (125 aa).

Asp89 bears the 3-methylthioaspartic acid mark. The interval 104 to 125 (TAGVKDRSQSRSKYGAKASKQD) is disordered.

Belongs to the universal ribosomal protein uS12 family. Part of the 30S ribosomal subunit. Contacts proteins S8 and S17. May interact with IF1 in the 30S initiation complex.

Functionally, with S4 and S5 plays an important role in translational accuracy. Interacts with and stabilizes bases of the 16S rRNA that are involved in tRNA selection in the A site and with the mRNA backbone. Located at the interface of the 30S and 50S subunits, it traverses the body of the 30S subunit contacting proteins on the other side and probably holding the rRNA structure together. The combined cluster of proteins S8, S12 and S17 appears to hold together the shoulder and platform of the 30S subunit. This Prochlorococcus marinus (strain MIT 9303) protein is Small ribosomal subunit protein uS12.